We begin with the raw amino-acid sequence, 258 residues long: F-box/SPRY domain-containing protein 1 (258 aa).

One can recognise an F-box domain in the interval 6–54; it reads TEYAPDIPDNVLELIFSYLKLQDLRNCSLVCKSWNRFLNDENNEVWRAQ. The B30.2/SPRY domain maps to 64 to 256; sequence FKTDLLSVVP…ISMVYLGPPL (193 aa).

It belongs to the FBXO45/Fsn family. In terms of assembly, component of an E3 ubiquitin ligase complex composed of hiw and Fsn.

It localises to the synapse. The protein operates within protein modification; protein ubiquitination. In terms of biological role, required in the presynaptic motoneuron to down-regulate the levels of wnd and restrain synaptic terminal growth at the neuromuscular junction (NMJ). This chain is F-box/SPRY domain-containing protein 1, found in Aedes aegypti (Yellowfever mosquito).